The chain runs to 128 residues: Small ribosomal subunit protein uS11 (128 aa).

It belongs to the universal ribosomal protein uS11 family. In terms of assembly, part of the 30S ribosomal subunit. Interacts with proteins S7 and S18. Binds to IF-3.

Located on the platform of the 30S subunit, it bridges several disparate RNA helices of the 16S rRNA. Forms part of the Shine-Dalgarno cleft in the 70S ribosome. The polypeptide is Small ribosomal subunit protein uS11 (Methylococcus capsulatus (strain ATCC 33009 / NCIMB 11132 / Bath)).